Here is a 488-residue protein sequence, read N- to C-terminus: Glutamyl-tRNA(Gln) amidotransferase subunit A (488 aa).

Residues K77 and S152 each act as charge relay system in the active site. Residue S176 is the Acyl-ester intermediate of the active site.

Belongs to the amidase family. GatA subfamily. In terms of assembly, heterotrimer of A, B and C subunits.

It carries out the reaction L-glutamyl-tRNA(Gln) + L-glutamine + ATP + H2O = L-glutaminyl-tRNA(Gln) + L-glutamate + ADP + phosphate + H(+). Allows the formation of correctly charged Gln-tRNA(Gln) through the transamidation of misacylated Glu-tRNA(Gln) in organisms which lack glutaminyl-tRNA synthetase. The reaction takes place in the presence of glutamine and ATP through an activated gamma-phospho-Glu-tRNA(Gln). The polypeptide is Glutamyl-tRNA(Gln) amidotransferase subunit A (Streptococcus pneumoniae (strain Hungary19A-6)).